Reading from the N-terminus, the 444-residue chain is Chromosome partition protein MukF (444 aa).

Positions 211–239 (LDETSGNLRELQDTLNAAGDKLQAQLLRI) are leucine-zipper.

It belongs to the MukF family. Interacts, and probably forms a ternary complex, with MukE and MukB via its C-terminal region. The complex formation is stimulated by calcium or magnesium. It is required for an interaction between MukE and MukB.

It localises to the cytoplasm. The protein resides in the nucleoid. Functionally, involved in chromosome condensation, segregation and cell cycle progression. May participate in facilitating chromosome segregation by condensation DNA from both sides of a centrally located replisome during cell division. Not required for mini-F plasmid partitioning. Probably acts via its interaction with MukB and MukE. Overexpression results in anucleate cells. It has a calcium binding activity. This is Chromosome partition protein MukF from Actinobacillus succinogenes (strain ATCC 55618 / DSM 22257 / CCUG 43843 / 130Z).